The primary structure comprises 636 residues: Asparagine synthetase domain-containing protein 1 (636 aa).

The active-site Nucleophile is Cys2. One can recognise a Glutamine amidotransferase type-2 domain in the interval Cys2–Arg187. One can recognise an Asparagine synthetase domain in the interval Gln291–Lys607.

The polypeptide is Asparagine synthetase domain-containing protein 1 (ASNSD1) (Gallus gallus (Chicken)).